Consider the following 455-residue polypeptide: Gamma-glutamyl phosphate reductase (455 aa).

It belongs to the gamma-glutamyl phosphate reductase family.

It localises to the cytoplasm. The enzyme catalyses L-glutamate 5-semialdehyde + phosphate + NADP(+) = L-glutamyl 5-phosphate + NADPH + H(+). It participates in amino-acid biosynthesis; L-proline biosynthesis; L-glutamate 5-semialdehyde from L-glutamate: step 2/2. Catalyzes the NADPH-dependent reduction of L-glutamate 5-phosphate into L-glutamate 5-semialdehyde and phosphate. The product spontaneously undergoes cyclization to form 1-pyrroline-5-carboxylate. The polypeptide is Gamma-glutamyl phosphate reductase (Synechococcus sp. (strain JA-2-3B'a(2-13)) (Cyanobacteria bacterium Yellowstone B-Prime)).